A 226-amino-acid polypeptide reads, in one-letter code: UPF0502 protein Gbem_0194 (226 aa).

Belongs to the UPF0502 family.

In Citrifermentans bemidjiense (strain ATCC BAA-1014 / DSM 16622 / JCM 12645 / Bem) (Geobacter bemidjiensis), this protein is UPF0502 protein Gbem_0194.